We begin with the raw amino-acid sequence, 209 residues long: Large ribosomal subunit protein uL3 (209 aa).

N5-methylglutamine is present on Gln150.

Belongs to the universal ribosomal protein uL3 family. In terms of assembly, part of the 50S ribosomal subunit. Forms a cluster with proteins L14 and L19. Methylated by PrmB.

One of the primary rRNA binding proteins, it binds directly near the 3'-end of the 23S rRNA, where it nucleates assembly of the 50S subunit. In Vibrio vulnificus (strain CMCP6), this protein is Large ribosomal subunit protein uL3.